Here is a 576-residue protein sequence, read N- to C-terminus: MSYPAEEEDVNYDPYSYPNDYDYHTGDPKADLAYERQYEHQQTYHVIPEVIKNFLQYFHKTISDLIDQKVYELQANRVSSESIEQKIYEIQDVYENSWNKLTDRFFKTSPWPEAEAIASLVGNDAVFLILYKELYYRHIYAKVSGGPTLDQRFESYYNYCNLFNYILNADGPAPLELPNQWLWDIIDEFIYQFQSFSQYRCKTAKKSEEEIEFLRNNPKIWNVHSVLNVLHSLVDKSNINRQLEVYTSGGDPESVAGEYGRHSLYKMLGYFSLVGLLRLHSLLGDYYQAIKVLENIELNKKSMYSRVPECQITTYYYVGFAYLMMRRYQDAIRVFANILLYIQRTRNMFQRTTYKYEMINKQNEQMHGLLAIALTMYPMRIDESIHTQLREKYGDKMLRMQKGDLQVFEELFSFACPKFLSPVVPNYENVHPNYHKEPFQQQLKVFAEEVQQQAQLSTIRSFLKLYTTMPVAKLAGFLDMSEQEFRIQLLVFKHKMKNLVWTSGISALDGEFQSASEVDFYIDKDMIHIADTKVARRYGDFFIRQIHKFEELNRTLKKMPLNTGASISSSSTSRAT.

The PCI domain maps to D330–R536.

The protein belongs to the eIF-3 subunit L family. As to quaternary structure, component of the eukaryotic translation initiation factor 3 (eIF-3) complex, which is composed of 13 subunits: eif3a, eif3b, eif3c, eif3d, eif3e, eif3f, eif3g, eif3h, eif3i, eif3j, eif3k, eif3l and eif3m.

It localises to the cytoplasm. Functionally, component of the eukaryotic translation initiation factor 3 (eIF-3) complex, which is involved in protein synthesis of a specialized repertoire of mRNAs and, together with other initiation factors, stimulates binding of mRNA and methionyl-tRNAi to the 40S ribosome. The eIF-3 complex specifically targets and initiates translation of a subset of mRNAs involved in cell proliferation. This chain is Eukaryotic translation initiation factor 3 subunit L (eif3l), found in Danio rerio (Zebrafish).